The primary structure comprises 217 residues: Small ribosomal subunit protein uS3 (217 aa).

In terms of domain architecture, KH type-2 spans Ile-40 to Arg-110.

This sequence belongs to the universal ribosomal protein uS3 family. As to quaternary structure, part of the 30S ribosomal subunit. Forms a tight complex with proteins S10 and S14.

In terms of biological role, binds the lower part of the 30S subunit head. Binds mRNA in the 70S ribosome, positioning it for translation. In Rickettsia akari (strain Hartford), this protein is Small ribosomal subunit protein uS3.